The primary structure comprises 796 residues: Pleckstrin homology domain-containing family H member 3 (796 aa).

The first 18 residues, 1–18, serve as a signal peptide directing secretion; it reads MPLPGGLWWLLCCRRGFT. Residues 28-71 are disordered; that stretch reads ELSGDGDEDEDDETFELRTPSPAGGGRGSLDVTLTQPTRNGPIS. Over residues 29–41 the composition is skewed to acidic residues; that stretch reads LSGDGDEDEDDET. A Phosphoserine modification is found at Ser30. A compositionally biased stretch (polar residues) spans 59-68; the sequence is VTLTQPTRNG. In terms of domain architecture, PH spans 95–199; it reads DIIVKGWLYR…WGVALREVIA (105 aa). Residues 237-399 enclose the MyTH4 domain; it reads HTSSALYAPL…PSLAEISALS (163 aa). Positions 404–757 constitute an FERM domain; it reads LLCTVHCPGA…ANPSPERPCR (354 aa). An N-linked (GlcNAc...) asparagine glycan is attached at Asn474. 2 disordered regions span residues 557–584 and 598–625; these read PLLD…PPSA and KRRA…GGAS. A compositionally biased stretch (pro residues) spans 563–583; that stretch reads LPPPIPPREQPPCPTRRPPPS. The span at 598–608 shows a compositional bias: basic residues; it reads KRRAERARRGG. Residue Arg638 is modified to Omega-N-methylarginine. The interval 750–796 is disordered; that stretch reads PSPERPCRSGSSSGPPSQDLPDTSPPSQHQVLEEPQGQSGCLKQLQD. Positions 757–766 are enriched in low complexity; sequence RSGSSSGPPS. The segment covering 774–796 has biased composition (polar residues); the sequence is PPSQHQVLEEPQGQSGCLKQLQD.

This chain is Pleckstrin homology domain-containing family H member 3 (Plekhh3), found in Mus musculus (Mouse).